The primary structure comprises 129 residues: MAGRGKGKTAGKKAVSRSSKAGLQFPVGRIARYLKKGKYAERIGAGAPVYLAAVLEYLTAEVLELAGNAARDNKKNRIVPRHIQLAIRNDEELGKLLGDVTIASGGVLPNIHAVLLPKKSKGGKGEEAA.

This sequence belongs to the histone H2A family. As to quaternary structure, the nucleosome is a histone octamer containing two molecules each of H2A, H2B, H3 and H4 assembled in one H3-H4 heterotetramer and two H2A-H2B heterodimers. The octamer wraps approximately 147 bp of DNA.

It is found in the nucleus. Its subcellular location is the chromosome. Functionally, core component of nucleosome. Nucleosomes wrap and compact DNA into chromatin, limiting DNA accessibility to the cellular machineries which require DNA as a template. Histones thereby play a central role in transcription regulation, DNA repair, DNA replication and chromosomal stability. DNA accessibility is regulated via a complex set of post-translational modifications of histones, also called histone code, and nucleosome remodeling. This Volvox carteri (Green alga) protein is Histone H2A-IV.